Reading from the N-terminus, the 397-residue chain is Acetate kinase (397 aa).

A Mg(2+)-binding site is contributed by Asn7. An ATP-binding site is contributed by Lys14. Arg90 lines the substrate pocket. Asp147 acts as the Proton donor/acceptor in catalysis. ATP contacts are provided by residues 207–211 (HLGNG), 282–284 (DFR), and 330–334 (GLGEN). A Mg(2+)-binding site is contributed by Glu383.

The protein belongs to the acetokinase family. Homodimer. Requires Mg(2+) as cofactor. The cofactor is Mn(2+).

It is found in the cytoplasm. The enzyme catalyses acetate + ATP = acetyl phosphate + ADP. The protein operates within metabolic intermediate biosynthesis; acetyl-CoA biosynthesis; acetyl-CoA from acetate: step 1/2. In terms of biological role, catalyzes the formation of acetyl phosphate from acetate and ATP. Can also catalyze the reverse reaction. The polypeptide is Acetate kinase (Clostridium botulinum (strain Kyoto / Type A2)).